Consider the following 166-residue polypeptide: Regulator of ribonuclease activity A (166 aa).

This sequence belongs to the RraA family. In terms of assembly, homotrimer. Binds to both RNA-binding sites in the C-terminal region of Rne and to RhlB.

It is found in the cytoplasm. Functionally, globally modulates RNA abundance by binding to RNase E (Rne) and regulating its endonucleolytic activity. Can modulate Rne action in a substrate-dependent manner by altering the composition of the degradosome. Modulates RNA-binding and helicase activities of the degradosome. The protein is Regulator of ribonuclease activity A of Histophilus somni (strain 2336) (Haemophilus somnus).